We begin with the raw amino-acid sequence, 364 residues long: CCA-adding enzyme (364 aa).

The ATP site is built by G19 and R22. Residues G19 and R22 each coordinate CTP. Mg(2+) contacts are provided by D32 and D34. 3 residues coordinate ATP: R102, R148, and R151. CTP is bound by residues R102, R148, and R151.

It belongs to the tRNA nucleotidyltransferase/poly(A) polymerase family. Bacterial CCA-adding enzyme type 2 subfamily. It depends on Mg(2+) as a cofactor.

The enzyme catalyses a tRNA precursor + 2 CTP + ATP = a tRNA with a 3' CCA end + 3 diphosphate. It catalyses the reaction a tRNA with a 3' CCA end + 2 CTP + ATP = a tRNA with a 3' CCACCA end + 3 diphosphate. Catalyzes the addition and repair of the essential 3'-terminal CCA sequence in tRNAs without using a nucleic acid template. Adds these three nucleotides in the order of C, C, and A to the tRNA nucleotide-73, using CTP and ATP as substrates and producing inorganic pyrophosphate. tRNA 3'-terminal CCA addition is required both for tRNA processing and repair. Also involved in tRNA surveillance by mediating tandem CCA addition to generate a CCACCA at the 3' terminus of unstable tRNAs. While stable tRNAs receive only 3'-terminal CCA, unstable tRNAs are marked with CCACCA and rapidly degraded. In Bordetella pertussis (strain Tohama I / ATCC BAA-589 / NCTC 13251), this protein is CCA-adding enzyme.